The sequence spans 406 residues: Glycosylated lysosomal membrane protein (406 aa).

An N-terminal signal peptide occupies residues 1–35; the sequence is MRGSVECTWGWGHCAPSPLLLWTLLLFAAPFGLLG. Residues 36–372 are Lumenal-facing; it reads EKTRQVSLEV…VDGLSPLVLG (337 aa). Residues N65, N134, N159, N187, and N230 are each glycosylated (N-linked (GlcNAc...) asparagine). The helical transmembrane segment at 373–393 threads the bilayer; sequence IMAVALGAPGLMLLGGGLVLL. Residues 394–406 lie on the Cytoplasmic side of the membrane; sequence LHHKKYSEYQSIN. Residues 402 to 406 carry the Lysosomal targeting motif motif; it reads YQSIN.

It belongs to the GLMP family. In terms of assembly, interacts (via lumenal domain) with lysosomal protein MFSD1; the interaction starts while both proteins are still in the endoplasmic reticulum and is required for stabilization of MFSD1 in lysosomes but has no direct effect on its targeting to lysosomes or transporter activity. Highly N-glycosylated. N-glycosylation is essential for GLMP stability and for MFSD1 lysosomal localization.

It is found in the lysosome membrane. In terms of biological role, required to protect lysosomal transporter MFSD1 from lysosomal proteolysis and for MFSD1 lysosomal localization. This Homo sapiens (Human) protein is Glycosylated lysosomal membrane protein.